The chain runs to 361 residues: Molybdenum import ATP-binding protein ModC (361 aa).

Positions 1–228 (MLTINIEKQL…EQMRPWVPLQ (228 aa)) constitute an ABC transporter domain. Position 31–38 (31–38 (GRSGAGKT)) interacts with ATP. A Mop domain is found at 289-356 (RSSIRNVLKG…IKGVTMTQMD (68 aa)).

The protein belongs to the ABC transporter superfamily. Molybdate importer (TC 3.A.1.8) family. In terms of assembly, the complex is composed of two ATP-binding proteins (ModC), two transmembrane proteins (ModB) and a solute-binding protein (ModA).

It is found in the cell inner membrane. The enzyme catalyses molybdate(out) + ATP + H2O = molybdate(in) + ADP + phosphate + H(+). Its function is as follows. Part of the ABC transporter complex ModABC involved in molybdenum import. Responsible for energy coupling to the transport system. This chain is Molybdenum import ATP-binding protein ModC, found in Shewanella oneidensis (strain ATCC 700550 / JCM 31522 / CIP 106686 / LMG 19005 / NCIMB 14063 / MR-1).